We begin with the raw amino-acid sequence, 99 residues long: Aspartyl/glutamyl-tRNA(Asn/Gln) amidotransferase subunit C (99 aa).

This sequence belongs to the GatC family. In terms of assembly, heterotrimer of A, B and C subunits.

The enzyme catalyses L-glutamyl-tRNA(Gln) + L-glutamine + ATP + H2O = L-glutaminyl-tRNA(Gln) + L-glutamate + ADP + phosphate + H(+). It catalyses the reaction L-aspartyl-tRNA(Asn) + L-glutamine + ATP + H2O = L-asparaginyl-tRNA(Asn) + L-glutamate + ADP + phosphate + 2 H(+). Functionally, allows the formation of correctly charged Asn-tRNA(Asn) or Gln-tRNA(Gln) through the transamidation of misacylated Asp-tRNA(Asn) or Glu-tRNA(Gln) in organisms which lack either or both of asparaginyl-tRNA or glutaminyl-tRNA synthetases. The reaction takes place in the presence of glutamine and ATP through an activated phospho-Asp-tRNA(Asn) or phospho-Glu-tRNA(Gln). The protein is Aspartyl/glutamyl-tRNA(Asn/Gln) amidotransferase subunit C of Albidiferax ferrireducens (strain ATCC BAA-621 / DSM 15236 / T118) (Rhodoferax ferrireducens).